A 360-amino-acid polypeptide reads, in one-letter code: Lipid-A-disaccharide synthase (360 aa).

This sequence belongs to the LpxB family.

The catalysed reaction is a lipid X + a UDP-2-N,3-O-bis[(3R)-3-hydroxyacyl]-alpha-D-glucosamine = a lipid A disaccharide + UDP + H(+). It participates in bacterial outer membrane biogenesis; LPS lipid A biosynthesis. Its function is as follows. Condensation of UDP-2,3-diacylglucosamine and 2,3-diacylglucosamine-1-phosphate to form lipid A disaccharide, a precursor of lipid A, a phosphorylated glycolipid that anchors the lipopolysaccharide to the outer membrane of the cell. This chain is Lipid-A-disaccharide synthase, found in Helicobacter pylori (strain P12).